The following is a 510-amino-acid chain: ATP synthase subunit alpha, mitochondrial (510 aa).

Position 171-178 (171-178 (GDRQTGKT)) interacts with ATP.

Belongs to the ATPase alpha/beta chains family. In terms of assembly, F-type ATPases have 2 components, CF(1) - the catalytic core - and CF(0) - the membrane proton channel. CF(1) has five subunits: alpha(3), beta(3), gamma(1), delta(1), epsilon(1). CF(0) has three main subunits: a, b and c.

It localises to the mitochondrion. The protein resides in the mitochondrion inner membrane. In terms of biological role, mitochondrial membrane ATP synthase (F(1)F(0) ATP synthase or Complex V) produces ATP from ADP in the presence of a proton gradient across the membrane which is generated by electron transport complexes of the respiratory chain. F-type ATPases consist of two structural domains, F(1) - containing the extramembraneous catalytic core, and F(0) - containing the membrane proton channel, linked together by a central stalk and a peripheral stalk. During catalysis, ATP synthesis in the catalytic domain of F(1) is coupled via a rotary mechanism of the central stalk subunits to proton translocation. Subunits alpha and beta form the catalytic core in F(1). Rotation of the central stalk against the surrounding alpha(3)beta(3) subunits leads to hydrolysis of ATP in three separate catalytic sites on the beta subunits. Subunit alpha does not bear the catalytic high-affinity ATP-binding sites. The polypeptide is ATP synthase subunit alpha, mitochondrial (ATPA) (Helianthus annuus (Common sunflower)).